A 632-amino-acid polypeptide reads, in one-letter code: CREB-regulated transcription coactivator 3 (632 aa).

Serine 66 bears the Phosphoserine mark. Basic residues predominate over residues asparagine 105 to valine 115. Positions asparagine 105–serine 156 are disordered. At serine 133 the chain carries Phosphoserine. At serine 145 the chain carries Phosphoserine; by SIK2. Over residues serine 145–serine 156 the composition is skewed to low complexity. At threonine 151 the chain carries Phosphothreonine. Serine 293 is modified (phosphoserine). Polar residues predominate over residues glycine 310–asparagine 338. The segment at glycine 310–proline 455 is disordered. The span at proline 339–leucine 360 shows a compositional bias: low complexity. 2 positions are modified to phosphoserine: serine 372 and serine 391. The segment covering serine 372–valine 405 has biased composition (polar residues). A compositionally biased stretch (pro residues) spans serine 413–proline 424. Residues leucine 425–glutamine 440 are compositionally biased toward low complexity. At serine 556 the chain carries Phosphoserine.

It belongs to the TORC family. Binding, as a tetramer, through its N-terminal region, with the bZIP domain of creb1 enhances recruitment of taf4 to the promoter. 'Arg-300' in the bZIP domain of creb1 is essential for this interaction.

The protein resides in the nucleus. The protein localises to the cytoplasm. Transcriptional coactivator for creb1 which activates transcription through both consensus and variant cAMP response element (CRE) sites. Acts as a coactivator, in the SIK/TORC signaling pathway, being active when dephosphorylated and acts independently of creb1 'Ser-119' phosphorylation. Enhances the interaction of creb1 with taf4. Regulates the expression of specific CREB-activated genes such as the steroidogenic gene, StAR. Potent coactivator of ppargc1a and inducer of mitochondrial biogenesis in muscle cells. The protein is CREB-regulated transcription coactivator 3 (crtc3) of Xenopus laevis (African clawed frog).